The chain runs to 514 residues: Citrate synthase 2, peroxisomal (514 aa).

Active-site residues include histidine 324, histidine 363, and aspartate 419.

Belongs to the citrate synthase family. In terms of tissue distribution, widely expressed. Expressed throughout the shoot. Expressed in flower, silique, stem, cauline leaf, young leaf, mature leaf and senescent leaf.

It is found in the peroxisome. The enzyme catalyses oxaloacetate + acetyl-CoA + H2O = citrate + CoA + H(+). It functions in the pathway carbohydrate metabolism; tricarboxylic acid cycle; isocitrate from oxaloacetate: step 1/2. Its function is as follows. Peroxisomal citrate synthase required for the fatty acid respiration in seedlings, citrate being exported from peroxisomes into mitochondria during respiration of triacylglycerol (TAG). Indeed, complete respiration requires the transfer of carbon in the form of citrate from the peroxisome to the mitochondria. This is Citrate synthase 2, peroxisomal (CSY2) from Arabidopsis thaliana (Mouse-ear cress).